Consider the following 413-residue polypeptide: Histidine--tRNA ligase (413 aa).

The protein belongs to the class-II aminoacyl-tRNA synthetase family. Homodimer.

The protein localises to the cytoplasm. It catalyses the reaction tRNA(His) + L-histidine + ATP = L-histidyl-tRNA(His) + AMP + diphosphate + H(+). The protein is Histidine--tRNA ligase of Ehrlichia chaffeensis (strain ATCC CRL-10679 / Arkansas).